The following is a 347-amino-acid chain: MSAVDKRAKFESALPVFVDEIVNYLKTINIPDDVTEWYKNSLFHNTLGGKYNRGLSVIDSYEILLGHPLDEAAYMKAAVLGWMVELLQSFFLIADDIMDASKTRRGQPCWYLMPGVGNIAINDAFMVESAIYFLLKKHFRQESCYVDLIELFHDVTFQTELGQQLDLLTAPEDSVDLSKFSLQKHSFIVIYKTAFYSFYLPVALAMHLAGVATPENLKCAQDILIILGKYFQVQDDYLDCYGDPTVTGKIGTDILDNKCSWIINLALAKCTPEQRVILDDNYGRKDSESEKRVKAVFEELNIRGEFENYEESEVSEIKKLIDGVDESTGLKKSIFTTFLGKIYKRNK.

Residues K50, R53, and Q88 each coordinate isopentenyl diphosphate. D95 and D99 together coordinate Mg(2+). R104 serves as a coordination point for dimethylallyl diphosphate. Isopentenyl diphosphate is bound at residue R105. Residues K192, T193, Q232, K249, and K258 each coordinate dimethylallyl diphosphate.

It belongs to the FPP/GGPP synthase family. Interacts with spo9. It depends on Mg(2+) as a cofactor.

The protein localises to the cytoplasm. It is found in the nucleus. It catalyses the reaction isopentenyl diphosphate + dimethylallyl diphosphate = (2E)-geranyl diphosphate + diphosphate. It carries out the reaction isopentenyl diphosphate + (2E)-geranyl diphosphate = (2E,6E)-farnesyl diphosphate + diphosphate. It functions in the pathway isoprenoid biosynthesis; farnesyl diphosphate biosynthesis; farnesyl diphosphate from geranyl diphosphate and isopentenyl diphosphate: step 1/1. Its pathway is isoprenoid biosynthesis; geranyl diphosphate biosynthesis; geranyl diphosphate from dimethylallyl diphosphate and isopentenyl diphosphate: step 1/1. Functionally, farnesyl pyrophosphate synthase; part of the second module of ergosterol biosynthesis pathway that includes the middle steps of the pathway. Fps1 catalyzes the sequential condensation of isopentenyl pyrophosphate with dimethylallyl pyrophosphate, and then with the resultant geranylpyrophosphate to the ultimate product farnesyl pyrophosphate. The second module is carried out in the vacuole and involves the formation of farnesyl diphosphate, which is also an important intermediate in the biosynthesis of ubiquinone, dolichol, heme and prenylated proteins. Activity by the mevalonate kinase erg12 first converts mevalonate into 5-phosphomevalonate. 5-phosphomevalonate is then further converted to 5-diphosphomevalonate by the phosphomevalonate kinase erg8. The diphosphomevalonate decarboxylase mvd1 then produces isopentenyl diphosphate. The isopentenyl-diphosphate delta-isomerase idi1 then catalyzes the 1,3-allylic rearrangement of the homoallylic substrate isopentenyl (IPP) to its highly electrophilic allylic isomer, dimethylallyl diphosphate (DMAPP). Finally the farnesyl diphosphate synthase fps1 catalyzes the sequential condensation of isopentenyl pyrophosphate with dimethylallyl pyrophosphate, and then with the resultant geranylpyrophosphate to the ultimate product farnesyl pyrophosphate. In Schizosaccharomyces pombe (strain 972 / ATCC 24843) (Fission yeast), this protein is Farnesyl pyrophosphate synthase.